The following is a 282-amino-acid chain: Insulin-like growth factor-binding protein 7 (282 aa).

Positions 1-26 (MERPSLRALLLGAAGLLLLLLPLSSS) are cleaved as a signal peptide. Residues 28–114 (SSDTCGPCEP…PGVSGVCVCK (87 aa)) enclose the IGFBP N-terminal domain. 7 cysteine pairs are disulfide-bonded: Cys32–Cys57, Cys35–Cys59, Cys40–Cys60, Cys48–Cys63, Cys71–Cys87, Cys81–Cys111, and Cys120–Cys156. The Kazal-like domain occupies 105–158 (PGVSGVCVCKSRYPVCGSDGTTYPSGCQLRAASQRAESRGEKAITQVSKGTCEQ). Residues 160 to 264 (PSIVTPPKDI…GQASASAKIT (105 aa)) form the Ig-like C2-type domain. A glycan (N-linked (GlcNAc...) asparagine) is linked at Asn171. The cysteines at positions 181 and 248 are disulfide-linked. Ser239 carries the post-translational modification Phosphoserine; by FAM20C.

May interact with VPS24/CHMP3; the relevance of such interaction however remains unclear. Interacts with CD93; this interaction plays a role in endothelial cells angiogenesis. In terms of processing, N-glycosylated.

Its subcellular location is the secreted. Functionally, binds IGF1 and IGF2 with a relatively low affinity. Stimulates prostacyclin (PGI2) production. Stimulates cell adhesion. Acts as a ligand for CD93 to play a role in angiogenesis. The chain is Insulin-like growth factor-binding protein 7 (IGFBP7) from Homo sapiens (Human).